The chain runs to 334 residues: Sulfhydrogenase 2 subunit beta (334 aa).

4Fe-4S ferredoxin-type domains follow at residues 220 to 250 and 294 to 328; these read KVWKKYAEKCLGCGNCTIVCPTCRCYEVCDT and CKNYFDPEAGFNCVGCGRCDEFCPARIEHVKVLDE. [4Fe-4S] cluster contacts are provided by Cys-229, Cys-232, Cys-235, Cys-239, Cys-306, Cys-309, Cys-312, and Cys-316.

In terms of assembly, dimer of heterotetramer of alpha, beta, gamma and delta subunits. The nickel-containing alpha and delta subunits constitute the hydrogenase activity. The beta and gamma subunits (flavin-containing dimer) constitute the sulfur reductase activity. [4Fe-4S] cluster is required as a cofactor.

It localises to the cytoplasm. It catalyses the reaction n sulfur + H2 = (n-1) sulfur + hydrogen sulfide + H(+). In terms of biological role, part of a bifunctional enzyme complex that functions as a hydrogen-evolving hydrogenase with sulfur-reducing activity. May play a role in hydrogen cycling during fermentative growth. Activity exhibited with NAD in addition to NADPH. The beta and gamma subunits form the sulfur-reducing component that catalyzes the cytoplasmic production of hydrogen sulfide in the presence of elemental sulfur. This is Sulfhydrogenase 2 subunit beta from Pyrococcus furiosus (strain ATCC 43587 / DSM 3638 / JCM 8422 / Vc1).